Reading from the N-terminus, the 509-residue chain is Anaerobic nitric oxide reductase transcription regulator NorR (509 aa).

At D56 the chain carries 4-aspartylphosphate. In terms of domain architecture, Sigma-54 factor interaction spans 186–415; it reads MIGRSPAMDR…LEHAIHRAAV (230 aa). ATP-binding positions include 214–221 and 277–286; these read GETGVGKE and ADKGTLFLDE. The segment at residues 484 to 503 is a DNA-binding region (H-T-H motif); that stretch reads WAATARALEMDGGNLHRLAR.

It functions in the pathway nitrogen metabolism; nitric oxide reduction. Its function is as follows. Required for the expression of anaerobic nitric oxide (NO) reductase, acts as a transcriptional activator for at least the norVW operon. Activation also requires sigma-54. This chain is Anaerobic nitric oxide reductase transcription regulator NorR, found in Aeromonas salmonicida (strain A449).